The primary structure comprises 518 residues: MANEGAGSLQQDASPGSSARPEPYPRPSPARYASTPSFESPQRHHRRNPIARRPVKETLNARSEYTLSQDDGTADDRINQYVIKQEIGRGSFGAVHVAVDQYGNEYAVKEFSKARLRKRAKSQLLRQSRGPKRSSRWPKLPFSSPGTGTWRRRDEKCSLFYQRRNCHYEEVTPQQSSILDRGTGRPDPRFSYMVMEMCKKGVVMKVTLEERADPYDDERCRCWFRDLILGIEYLHAQGIVHRDIKPDNCLITNDDVLKVVDFGVSEMFVLNSDMFTAKSAGSPAFLPPELCVVKHGDVSGKAADIWSMGVTLYCLRYGKLPFEEHSIIELYDAIKNRPIVCDGETDEVFKDLMLRILEKDPAKRIQMDELREHPWVTKNGMDPLLPKSENTAEIVDLPTEEEMFSAITKNFGHVLAVMKAAKKFKSLQGPTRASTPIQSILGQEYETHFVEPPTQMDPEESVSLPSPLPYKKTQSLNTYNRRAWERDDVVKGYHPQRRKLSLVLRQRAANRVLRTALF.

Positions 1 to 72 (MANEGAGSLQ…SEYTLSQDDG (72 aa)) are disordered. Polar residues-rich tracts occupy residues 8-17 (SLQQDASPGS) and 60-71 (NARSEYTLSQDD). The Protein kinase domain maps to 81-376 (YVIKQEIGRG…MDELREHPWV (296 aa)). ATP-binding positions include 87 to 95 (IGRGSFGAV) and lysine 109. A disordered region spans residues 119-149 (RAKSQLLRQSRGPKRSSRWPKLPFSSPGTGT). Residue aspartate 243 is the Proton acceptor of the active site. The tract at residues 404–409 (FSAITK) is autoinhibitory domain. The calmodulin-binding stretch occupies residues 407–431 (ITKNFGHVLAVMKAAKKFKSLQGPT). The disordered stretch occupies residues 453–472 (PTQMDPEESVSLPSPLPYKK).

Belongs to the protein kinase superfamily. Ser/Thr protein kinase family.

It carries out the reaction L-seryl-[protein] + ATP = O-phospho-L-seryl-[protein] + ADP + H(+). The catalysed reaction is L-threonyl-[protein] + ATP = O-phospho-L-threonyl-[protein] + ADP + H(+). With respect to regulation, activated by Ca(2+)/calmodulin. Binding of calmodulin may relieve intrasteric autoinhibition. In terms of biological role, calcium/calmodulin-dependent protein kinase that operates in the calcium-triggered CaMKK-CaMK1 signaling cascade. Phosphorylates and activates cmkB in vitro. Required in G1-phase of the cell cycle for proper timing of the initial nuclear division after germination as well as for subsequent nuclear division cycles. Required for the normal temporal regulation of nimX activity. In Emericella nidulans (Aspergillus nidulans), this protein is Calcium/calmodulin-dependent protein kinase kinase cmkC.